The primary structure comprises 250 residues: Probable aquaporin TIP2-2 (250 aa).

N-acetylmethionine is present on M1. The Cytoplasmic portion of the chain corresponds to 1-24 (MVKIEIGSVGDSFSVASLKAYLSE). N6,N6-dimethyllysine is present on K3. Residues 25 to 45 (FIATLLFVFAGVGSALAFAKL) form a helical membrane-spanning segment. The Vacuolar portion of the chain corresponds to 46–53 (TSDAALDP). The helical transmembrane segment at 54-74 (AGLVAVAVAHAFALFVGVSIA) threads the bilayer. Topologically, residues 75 to 101 (ANISGGHLNPAVTLGLAVGGNITVITG) are cytoplasmic. Positions 83 to 85 (NPA) match the NPA 1 motif. The helical transmembrane segment at 102–122 (FFYWIAQCLGSIVACLLLVFV) threads the bilayer. Over 123 to 133 (TNGESVPTHGV) the chain is Vacuolar. The chain crosses the membrane as a helical span at residues 134–154 (AAGLGAIEGVVMEIVVTFALV). The Cytoplasmic segment spans residues 155-168 (YTVYATAADPKKGS). A helical membrane pass occupies residues 169-189 (LGTIAPIAIGFIVGANILAAG). The Vacuolar segment spans residues 190–210 (PFSGGSMNPARSFGPAVVSGD). Positions 197 to 199 (NPA) match the NPA 2 motif. Residues 211–231 (FSQIWIYWVGPLVGGALAGLI) traverse the membrane as a helical segment. At 232–250 (YGDVFIGSYAPAPTTESYP) the chain is on the cytoplasmic side. A Phosphoserine modification is found at S248.

It belongs to the MIP/aquaporin (TC 1.A.8) family. TIP (TC 1.A.8.10) subfamily. Interacts with cucumber mosaic virus (CMV) Protein 1a. In terms of tissue distribution, expressed above groung and in roots.

The protein resides in the vacuole membrane. Functionally, aquaporins facilitate the transport of water and small neutral solutes across cell membranes. The protein is Probable aquaporin TIP2-2 (TIP2-2) of Arabidopsis thaliana (Mouse-ear cress).